The following is a 123-amino-acid chain: Ribosome-binding factor A (123 aa).

Belongs to the RbfA family. In terms of assembly, monomer. Binds 30S ribosomal subunits, but not 50S ribosomal subunits or 70S ribosomes.

It is found in the cytoplasm. Functionally, one of several proteins that assist in the late maturation steps of the functional core of the 30S ribosomal subunit. Associates with free 30S ribosomal subunits (but not with 30S subunits that are part of 70S ribosomes or polysomes). Required for efficient processing of 16S rRNA. May interact with the 5'-terminal helix region of 16S rRNA. In Acetivibrio thermocellus (strain ATCC 27405 / DSM 1237 / JCM 9322 / NBRC 103400 / NCIMB 10682 / NRRL B-4536 / VPI 7372) (Clostridium thermocellum), this protein is Ribosome-binding factor A.